A 432-amino-acid chain; its full sequence is Homogentisate 1,2-dioxygenase (432 aa).

The active-site Proton acceptor is the His-286. 2 residues coordinate Fe cation: His-329 and Glu-335. Positions 344 and 365 each coordinate homogentisate. His-365 is a binding site for Fe cation.

The protein belongs to the homogentisate dioxygenase family. As to quaternary structure, hexamer; dimer of trimers. It depends on Fe cation as a cofactor.

The catalysed reaction is homogentisate + O2 = 4-maleylacetoacetate + H(+). Its pathway is amino-acid degradation; L-phenylalanine degradation; acetoacetate and fumarate from L-phenylalanine: step 4/6. In terms of biological role, involved in the catabolism of homogentisate (2,5-dihydroxyphenylacetate or 2,5-OH-PhAc), a central intermediate in the degradation of phenylalanine and tyrosine. Catalyzes the oxidative ring cleavage of the aromatic ring of homogentisate to yield maleylacetoacetate. The sequence is that of Homogentisate 1,2-dioxygenase from Bordetella petrii (strain ATCC BAA-461 / DSM 12804 / CCUG 43448).